The following is a 135-amino-acid chain: Large ribosomal subunit protein uL16c (135 aa).

It belongs to the universal ribosomal protein uL16 family. In terms of assembly, part of the 50S ribosomal subunit.

Its subcellular location is the plastid. It is found in the chloroplast. The sequence is that of Large ribosomal subunit protein uL16c from Morus indica (Mulberry).